Reading from the N-terminus, the 326-residue chain is Putative ribose-phosphate pyrophosphokinase 2 (326 aa).

Residues 43-45 and 102-103 each bind ATP; these read DGE and RQ. Residue H136 participates in Mg(2+) binding. D-ribose 5-phosphate is bound by residues D225 and 229-233; that span reads NTGKT.

This sequence belongs to the ribose-phosphate pyrophosphokinase family. Class I subfamily. As to quaternary structure, homohexamer. The cofactor is Mg(2+).

It localises to the cytoplasm. The enzyme catalyses D-ribose 5-phosphate + ATP = 5-phospho-alpha-D-ribose 1-diphosphate + AMP + H(+). It functions in the pathway metabolic intermediate biosynthesis; 5-phospho-alpha-D-ribose 1-diphosphate biosynthesis; 5-phospho-alpha-D-ribose 1-diphosphate from D-ribose 5-phosphate (route I): step 1/1. In terms of biological role, involved in the biosynthesis of the central metabolite phospho-alpha-D-ribosyl-1-pyrophosphate (PRPP) via the transfer of pyrophosphoryl group from ATP to 1-hydroxyl of ribose-5-phosphate (Rib-5-P). The protein is Putative ribose-phosphate pyrophosphokinase 2 of Streptococcus pyogenes serotype M18 (strain MGAS8232).